The following is a 149-amino-acid chain: Large ribosomal subunit protein eL19 (149 aa).

Positions 55–69 (KGISSARKKEVQEQK) are enriched in basic and acidic residues. The interval 55–93 (KGISSARKKEVQEQKRKGKRKGPGSRRGAKGARTPKKEK) is disordered. A compositionally biased stretch (basic residues) spans 70–88 (RKGKRKGPGSRRGAKGART).

The protein belongs to the eukaryotic ribosomal protein eL19 family. In terms of assembly, part of the 50S ribosomal subunit.

In terms of biological role, binds to the 23S rRNA. The protein is Large ribosomal subunit protein eL19 of Methanococcus vannielii.